The sequence spans 253 residues: MSAPTDRSATPAERNEKSKYKRILLKLSGEALIGEHEFGIDPKVLDRMALEIGQLVGIGVQVGIVIGGGNLFRGAALHAAGMERVTGDHMGMLATVMNGLAMRDALERSNIRSRVMSAIPMSGVVEHYDRRTAIRYLTSGDVVIFSAGTGNPFFTTDSAACLRGIEIDANVVLKATKVDGVYDKDPVKHADAAKYERLTYDDVLDQKLGVMDLTAICLVRDHDMPVRVFDMTKPGALLNLVVGGKEGTLVDRG.

ATP is bound at residue 26–29 (KLSG). A UMP-binding site is contributed by G68. 2 residues coordinate ATP: G69 and R73. Residues D88 and 149–156 (TGNPFFTT) contribute to the UMP site. Residues T176, Y182, and D185 each contribute to the ATP site.

This sequence belongs to the UMP kinase family. Homohexamer.

The protein resides in the cytoplasm. The catalysed reaction is UMP + ATP = UDP + ADP. The protein operates within pyrimidine metabolism; CTP biosynthesis via de novo pathway; UDP from UMP (UMPK route): step 1/1. With respect to regulation, inhibited by UTP. Catalyzes the reversible phosphorylation of UMP to UDP. This is Uridylate kinase from Chromohalobacter salexigens (strain ATCC BAA-138 / DSM 3043 / CIP 106854 / NCIMB 13768 / 1H11).